A 138-amino-acid chain; its full sequence is Ribulose bisphosphate carboxylase small subunit (138 aa).

Belongs to the RuBisCO small chain family. As to quaternary structure, heterohexadecamer of 8 large and 8 small subunits.

It is found in the plastid. The protein resides in the chloroplast. In terms of biological role, ruBisCO catalyzes two reactions: the carboxylation of D-ribulose 1,5-bisphosphate, the primary event in carbon dioxide fixation, as well as the oxidative fragmentation of the pentose substrate in the photorespiration process. Both reactions occur simultaneously and in competition at the same active site. Although the small subunit is not catalytic it is essential for maximal activity. The protein is Ribulose bisphosphate carboxylase small subunit of Antithamnion sp. (Red alga).